We begin with the raw amino-acid sequence, 343 residues long: Heat-inducible transcription repressor HrcA (343 aa).

The protein belongs to the HrcA family.

Its function is as follows. Negative regulator of class I heat shock genes (grpE-dnaK-dnaJ and groELS operons). Prevents heat-shock induction of these operons. The sequence is that of Heat-inducible transcription repressor HrcA from Bacillus velezensis (strain DSM 23117 / BGSC 10A6 / LMG 26770 / FZB42) (Bacillus amyloliquefaciens subsp. plantarum).